The sequence spans 409 residues: Tyrosine--tRNA ligase (409 aa).

Tyrosine 39 serves as a coordination point for L-tyrosine. The 'HIGH' region signature appears at 44–53; it reads PTAASLHVGS. Residues tyrosine 176 and glutamine 180 each coordinate L-tyrosine. The 'KMSKS' region motif lies at 236 to 240; the sequence is KMGKT. Lysine 239 serves as a coordination point for ATP. In terms of domain architecture, S4 RNA-binding spans 346 to 408; the sequence is ISLVDALVGL…GKKAHGVIQA (63 aa).

The protein belongs to the class-I aminoacyl-tRNA synthetase family. TyrS type 1 subfamily. In terms of assembly, homodimer.

Its subcellular location is the cytoplasm. It catalyses the reaction tRNA(Tyr) + L-tyrosine + ATP = L-tyrosyl-tRNA(Tyr) + AMP + diphosphate + H(+). Its function is as follows. Catalyzes the attachment of tyrosine to tRNA(Tyr) in a two-step reaction: tyrosine is first activated by ATP to form Tyr-AMP and then transferred to the acceptor end of tRNA(Tyr). In Zymomonas mobilis subsp. mobilis (strain ATCC 31821 / ZM4 / CP4), this protein is Tyrosine--tRNA ligase.